A 299-amino-acid polypeptide reads, in one-letter code: Protein LacX, plasmid (299 aa).

This is Protein LacX, plasmid (lacX) from Lactococcus lactis subsp. lactis (Streptococcus lactis).